Here is a 461-residue protein sequence, read N- to C-terminus: MTEKQTWSQRFESALHPAIALFNASISFDIELIEYDLTGSQAHAQMLAHTGIISPAEGEQLVAGLEQIREEYRQGKFQPGIDAEDVHFAVERRLTEIVGDVGKKLHTARSRNDQVGTDTRLYLRDQISQIKTQLREFQRVLLDIAEQNVETLIPGYTHLQRAQPVSLAHHLLAYFHMAQRDWERLGDVYRRVNISPLGCGALAGTTFPIDRHYTAKLLQFERIYENSLDGVSDRDFAIEFLCAASLIMVHLSRLSEEIILWASEEFRFVTLKDSCATGSSIMPQKKNPDVPELVRGKTGRVFGHLQAMLVIMKGLPLAYNKDLQEDKEGLFDSVNTVKACLEAMTILLQEGLEFRTQRLAEAVTQDFSNATDVADYLAARGVPFREAYNIVGKVVKTSIAAGKLLKDLTLEEWQEIHPAFATDIYEAISPRQVVAARNSYGGTGFAQVSKAVSAAREEIGE.

This sequence belongs to the lyase 1 family. Argininosuccinate lyase subfamily.

The protein resides in the cytoplasm. The catalysed reaction is 2-(N(omega)-L-arginino)succinate = fumarate + L-arginine. Its pathway is amino-acid biosynthesis; L-arginine biosynthesis; L-arginine from L-ornithine and carbamoyl phosphate: step 3/3. The chain is Argininosuccinate lyase from Trichormus variabilis (strain ATCC 29413 / PCC 7937) (Anabaena variabilis).